A 353-amino-acid polypeptide reads, in one-letter code: Photosystem II protein D1 (353 aa).

The residue at position 2 (Thr2) is an N-acetylthreonine. Thr2 bears the Phosphothreonine mark. A run of 3 helical transmembrane segments spans residues 29 to 46 (YIGWFGVLMIPTLLTATS), 118 to 133 (HFLLGVACYMGREWEL), and 142 to 156 (WIAVAYSAPVAAATA). His118 provides a ligand contact to chlorophyll a. Tyr126 contributes to the pheophytin a binding site. Asp170 and Glu189 together coordinate [CaMn4O5] cluster. The chain crosses the membrane as a helical span at residues 197–218 (FHMLGVAGVFGGSLFSAMHGSL). His198 lines the chlorophyll a pocket. A quinone is bound by residues His215 and 264-265 (SF). His215 is a binding site for Fe cation. Position 272 (His272) interacts with Fe cation. Residues 274–288 (FLAAWPVVGIWFTAL) traverse the membrane as a helical segment. [CaMn4O5] cluster is bound by residues His332, Glu333, Asp342, and Ala344. Positions 345–353 (AIEAPATNG) are excised as a propeptide.

The protein belongs to the reaction center PufL/M/PsbA/D family. As to quaternary structure, PSII is composed of 1 copy each of membrane proteins PsbA, PsbB, PsbC, PsbD, PsbE, PsbF, PsbH, PsbI, PsbJ, PsbK, PsbL, PsbM, PsbT, PsbX, PsbY, PsbZ, Psb30/Ycf12, at least 3 peripheral proteins of the oxygen-evolving complex and a large number of cofactors. It forms dimeric complexes. The D1/D2 heterodimer binds P680, chlorophylls that are the primary electron donor of PSII, and subsequent electron acceptors. It shares a non-heme iron and each subunit binds pheophytin, quinone, additional chlorophylls, carotenoids and lipids. D1 provides most of the ligands for the Mn4-Ca-O5 cluster of the oxygen-evolving complex (OEC). There is also a Cl(-1) ion associated with D1 and D2, which is required for oxygen evolution. The PSII complex binds additional chlorophylls, carotenoids and specific lipids. serves as cofactor. In terms of processing, tyr-161 forms a radical intermediate that is referred to as redox-active TyrZ, YZ or Y-Z. Post-translationally, C-terminally processed by CTPA; processing is essential to allow assembly of the oxygen-evolving complex and thus photosynthetic growth.

The protein localises to the plastid membrane. The enzyme catalyses 2 a plastoquinone + 4 hnu + 2 H2O = 2 a plastoquinol + O2. Functionally, photosystem II (PSII) is a light-driven water:plastoquinone oxidoreductase that uses light energy to abstract electrons from H(2)O, generating O(2) and a proton gradient subsequently used for ATP formation. It consists of a core antenna complex that captures photons, and an electron transfer chain that converts photonic excitation into a charge separation. The D1/D2 (PsbA/PsbD) reaction center heterodimer binds P680, the primary electron donor of PSII as well as several subsequent electron acceptors. This chain is Photosystem II protein D1, found in Cuscuta reflexa (Southern Asian dodder).